We begin with the raw amino-acid sequence, 576 residues long: Arginine--tRNA ligase (576 aa).

A 'HIGH' region motif is present at residues 132–142 (ANPTGPMHIGH).

This sequence belongs to the class-I aminoacyl-tRNA synthetase family. In terms of assembly, monomer.

The protein localises to the cytoplasm. It carries out the reaction tRNA(Arg) + L-arginine + ATP = L-arginyl-tRNA(Arg) + AMP + diphosphate. This Ehrlichia chaffeensis (strain ATCC CRL-10679 / Arkansas) protein is Arginine--tRNA ligase.